The sequence spans 181 residues: MLKFIKSSTKESEWLKNPKNEICFVGRSNVGKSSLINALFKTRVVKVGKTPGKTKLINFFEDERGNSVVDLPGYGYAKLSKEAQSEISDMIFEFLTKRVEIKKLFLLIDSRLGFTPIDQEFYDFLKEAPFEIIIVATKRDKLNQSQTYQIKKSLDELKVKYFLVSITKKEFLQDLVNNLFN.

The 164-residue stretch at 18–181 (PKNEICFVGR…LQDLVNNLFN (164 aa)) folds into the EngB-type G domain. GTP-binding positions include 26–33 (GRSNVGKS), 52–56 (GKTKL), 70–73 (DLPG), 137–140 (TKRD), and 164–166 (VSI). The Mg(2+) site is built by serine 33 and threonine 54.

The protein belongs to the TRAFAC class TrmE-Era-EngA-EngB-Septin-like GTPase superfamily. EngB GTPase family. Requires Mg(2+) as cofactor.

Necessary for normal cell division and for the maintenance of normal septation. This Mycoplasma mobile (strain ATCC 43663 / 163K / NCTC 11711) (Mesomycoplasma mobile) protein is Probable GTP-binding protein EngB.